We begin with the raw amino-acid sequence, 639 residues long: MTLEITGSELIKSKLIDAPERSGVYRMFDVNKQVLYVGKAKNLKKRLTNYIKSNLDNKTLRMIANTCFLEYSITNSEVEALLLEAQLIKKFQPKFNILLKDCKSFPFIKLRLDHDFPQLLKYRGKTLSDGKFFGPFASSVEVNTTLTELQKIFKLRSCTDNYFNSRTRPCLQYEIKRCYAPCVGKINKEDYRDLVTQVKDFLQGRTKELQENLSRKMEELSSQMRFEEAAEIRDRIKALSYVQLKAGVSDVVKDADIIAIVEKNGHYCVEVFLYRAGQACGNIPYFPTATENSTKEEVLEYFLLQFYQKQHVPAAIIINHEINDKENVIEAIKKINNILQINITVPNKGGKAKLVQNAETHALFSLEQYLKKFAKNQEIMFEIKELFGLSEIPERIEIYDNSHIQGKFAVGVMVVAGKVGFDKKEYRVFNVHTPSLVCHSRESGDPKRLMDSCFRGNGIKNCGGDIKGDDYEMLRQVLTRRLTRLRQEPHKLPSLMIIDGGKGHLGVVKEVMDKFEMNIPFVCMSKGVDRNAGFEQFHVIGKEVFTLDKNLPVMKYLQILRDEAHNFAIKNHRLGRSRAIKISRLDDIEGVGETRKKALLHYFGSYKAVCDATIYELAKVNGINKLLAEMIFNVLHRKN.

Residues 20–97 (ERSGVYRMFD…IKKFQPKFNI (78 aa)) form the GIY-YIG domain. Positions 207-242 (KELQENLSRKMEELSSQMRFEEAAEIRDRIKALSYV) constitute a UVR domain.

Belongs to the UvrC family. As to quaternary structure, interacts with UvrB in an incision complex.

It is found in the cytoplasm. Functionally, the UvrABC repair system catalyzes the recognition and processing of DNA lesions. UvrC both incises the 5' and 3' sides of the lesion. The N-terminal half is responsible for the 3' incision and the C-terminal half is responsible for the 5' incision. In Rickettsia conorii (strain ATCC VR-613 / Malish 7), this protein is UvrABC system protein C.